We begin with the raw amino-acid sequence, 255 residues long: 5-oxoprolinase subunit A (255 aa).

Belongs to the LamB/PxpA family. In terms of assembly, forms a complex composed of PxpA, PxpB and PxpC.

It carries out the reaction 5-oxo-L-proline + ATP + 2 H2O = L-glutamate + ADP + phosphate + H(+). Its function is as follows. Catalyzes the cleavage of 5-oxoproline to form L-glutamate coupled to the hydrolysis of ATP to ADP and inorganic phosphate. This chain is 5-oxoprolinase subunit A, found in Campylobacter jejuni subsp. jejuni serotype O:6 (strain 81116 / NCTC 11828).